Reading from the N-terminus, the 331-residue chain is Porphobilinogen deaminase (331 aa).

Cys248 is modified (S-(dipyrrolylmethanemethyl)cysteine). The interval 307 to 331 is disordered; that stretch reads QLLQAPKQTGEPHDPDRHDKGTGRP. The span at 316 to 331 shows a compositional bias: basic and acidic residues; the sequence is GEPHDPDRHDKGTGRP.

It belongs to the HMBS family. As to quaternary structure, monomer. The cofactor is dipyrromethane.

It carries out the reaction 4 porphobilinogen + H2O = hydroxymethylbilane + 4 NH4(+). The protein operates within porphyrin-containing compound metabolism; protoporphyrin-IX biosynthesis; coproporphyrinogen-III from 5-aminolevulinate: step 2/4. Its function is as follows. Tetrapolymerization of the monopyrrole PBG into the hydroxymethylbilane pre-uroporphyrinogen in several discrete steps. This Acidothermus cellulolyticus (strain ATCC 43068 / DSM 8971 / 11B) protein is Porphobilinogen deaminase.